We begin with the raw amino-acid sequence, 391 residues long: Enoyl-CoA delta isomerase 2 (391 aa).

The N-terminal 36 residues, 1-36, are a transit peptide targeting the mitochondrion; it reads MAAVTWSRARCWCPSLLQVLRLPVTKLHLGRPAMRA. The ACB domain maps to 37–122; sequence TQQDFENAMN…VSSLSSSSEA (86 aa). Lysine 49 is subject to N6-acetyllysine; alternate. Lysine 49 is modified (N6-succinyllysine; alternate). Lysine 53 is modified (N6-succinyllysine). N6-acetyllysine; alternate is present on lysine 60. Lysine 60 is modified (N6-succinyllysine; alternate). An an acyl-CoA-binding site is contributed by 64–68; the sequence is YALYK. N6-succinyllysine occurs at positions 68, 79, and 88. Lysine 90 is subject to N6-acetyllysine; alternate. Lysine 90 is subject to N6-succinyllysine; alternate. Position 90 (lysine 90) interacts with an acyl-CoA. At serine 99 the chain carries Phosphoserine. An acyl-CoA is bound at residue tyrosine 109. Serine 117 carries the phosphoserine modification. Lysine 127 and lysine 159 each carry N6-succinyllysine. The interval 149–319 is ECH-like; sequence TKITFNRPSK…AQGLVTEVFP (171 aa). Residue 196-200 coordinates substrate; that stretch reads SGNDL. Residue lysine 286 is modified to N6-succinyllysine. The Microbody targeting signal signature appears at 389-391; the sequence is PKL.

It in the C-terminal section; belongs to the enoyl-CoA hydratase/isomerase family. As to expression, liver (at protein level).

Its subcellular location is the peroxisome matrix. The protein resides in the mitochondrion. The enzyme catalyses a (3Z)-enoyl-CoA = a 4-saturated (2E)-enoyl-CoA. The catalysed reaction is a (3E)-enoyl-CoA = a 4-saturated (2E)-enoyl-CoA. It catalyses the reaction (2E)-tetradecenoyl-CoA = (3Z)-tetradecenoyl-CoA. It carries out the reaction (3E)-tetradecenoyl-CoA = (2E)-tetradecenoyl-CoA. The enzyme catalyses (3E)-octenoyl-CoA = (2E)-octenoyl-CoA. The catalysed reaction is (3Z)-octenoyl-CoA = (2E)-octenoyl-CoA. It catalyses the reaction (3E)-nonenoyl-CoA = (2E)-nonenoyl-CoA. Its pathway is lipid metabolism; fatty acid beta-oxidation. Functionally, able to isomerize both 3-cis and 3-trans double bonds into the 2-trans form in a range of enoyl-CoA species. Has a preference for 3-trans substrates. The chain is Enoyl-CoA delta isomerase 2 from Rattus norvegicus (Rat).